Reading from the N-terminus, the 141-residue chain is Putative antiporter subunit mnhB2 (141 aa).

The next 4 membrane-spanning stretches (helical) occupy residues 10–30 (SVTKIVVFILLTFGFYVFFAG), 35–55 (GGGFIGGLIFSSAFILMFLAF), 70–90 (KLMIIGSLISVATASVPMFFG), and 116–136 (LFELGILLTVVGVIVTVMLSI).

The protein belongs to the CPA3 antiporters (TC 2.A.63) subunit B family. May form a heterooligomeric complex that consists of seven subunits: mnhA2, mnhB2, mnhC2, mnhD2, mnhE2, mnhF2 and mnhG2.

It is found in the cell membrane. The protein is Putative antiporter subunit mnhB2 (mnhB2) of Staphylococcus epidermidis (strain ATCC 35984 / DSM 28319 / BCRC 17069 / CCUG 31568 / BM 3577 / RP62A).